The following is a 140-amino-acid chain: Prepilin peptidase-dependent protein A (140 aa).

Residues 1 to 23 (MLLLKASAICGKGNEGKRNKKGG) constitute a propeptide that is removed on maturation. An N-methylphenylalanine modification is found at Phe24. A helical transmembrane segment spans residues 24-44 (FTLIELTVVLAIMAIILMVIA).

The protein localises to the membrane. Its function is as follows. Not yet known. This Clostridium perfringens (strain 13 / Type A) protein is Prepilin peptidase-dependent protein A (ppdA).